A 550-amino-acid chain; its full sequence is MAAKDVKFGNEARVKMLRGVNVLADAVKVTLGPKGRNVVLDKSFGAPSITKDGVSVAREIELEDKFENMGAQMVKEVASKANDAAGDGTTTATLLAQAIVNEGLKAVAAGMNPMDLKRGIDKAVISAVEELRIMSVPCADSKAITQVGTISANADEKVGSLIADAMDKVGKDGVITVEEGTGLQDELEVVKGMQFDRGYLSPYFINKPETGIVELENPYILMADKKISNVRELLPILEAVAKSGKPLLIISEDLEGEALATLVVNSMRGIVKVAAVKAPGFGDRRKAMLQDISILTSGSVISEELAMELEKSTLEDLGQAKRVVINKDTTTIIGGIGEKYNIQSRISQIRQQIQEATSDYDKEKLNERLAKLSGGVAVLKVGAATEVEMKEKKARVEDALHATRAAVEEGVVPGGGVALVRVAAKISNIVGQNEDQNVGIRVALRAMEAPLRQIVSNSGEEPSVVTNNVKDGKGNYGYNAATDEYGDMISFGILDPTKVTRSALQYASSVAGLMITTECMVTDLPKDEKSDLGNSSAPSAGGMGGMGGMM.

ATP-binding positions include 30–33 (TLGP), Lys51, 87–91 (DGTTT), Gly415, 479–481 (NAA), and Asp495. Residues 526–550 (KDEKSDLGNSSAPSAGGMGGMGGMM) form a disordered region. Residues 541–550 (GGMGGMGGMM) are compositionally biased toward gly residues.

The protein belongs to the chaperonin (HSP60) family. Forms a cylinder of 14 subunits composed of two heptameric rings stacked back-to-back. Interacts with the co-chaperonin GroES.

Its subcellular location is the cytoplasm. It catalyses the reaction ATP + H2O + a folded polypeptide = ADP + phosphate + an unfolded polypeptide.. In terms of biological role, together with its co-chaperonin GroES, plays an essential role in assisting protein folding. The GroEL-GroES system forms a nano-cage that allows encapsulation of the non-native substrate proteins and provides a physical environment optimized to promote and accelerate protein folding. This chain is Chaperonin GroEL, found in Buchnera aphidicola subsp. Baizongia pistaciae (strain Bp).